A 129-amino-acid polypeptide reads, in one-letter code: Glycine cleavage system H protein (129 aa).

The region spanning 24 to 106 is the Lipoyl-binding domain; sequence SYTVGITEHA…YGDGWFFRIM (83 aa). K65 is subject to N6-lipoyllysine.

It belongs to the GcvH family. As to quaternary structure, the glycine cleavage system is composed of four proteins: P, T, L and H. It depends on (R)-lipoate as a cofactor.

Functionally, the glycine cleavage system catalyzes the degradation of glycine. The H protein shuttles the methylamine group of glycine from the P protein to the T protein. This Shewanella denitrificans (strain OS217 / ATCC BAA-1090 / DSM 15013) protein is Glycine cleavage system H protein.